The following is a 354-amino-acid chain: Uroporphyrinogen decarboxylase (354 aa).

Substrate contacts are provided by residues 30-34 (RQAGR), Asp-79, Tyr-154, Ser-209, and His-333.

The protein belongs to the uroporphyrinogen decarboxylase family. In terms of assembly, homodimer.

The protein resides in the cytoplasm. The catalysed reaction is uroporphyrinogen III + 4 H(+) = coproporphyrinogen III + 4 CO2. It participates in porphyrin-containing compound metabolism; protoporphyrin-IX biosynthesis; coproporphyrinogen-III from 5-aminolevulinate: step 4/4. Catalyzes the decarboxylation of four acetate groups of uroporphyrinogen-III to yield coproporphyrinogen-III. In Mycolicibacterium gilvum (strain PYR-GCK) (Mycobacterium gilvum (strain PYR-GCK)), this protein is Uroporphyrinogen decarboxylase.